A 316-amino-acid chain; its full sequence is Pantothenate kinase (316 aa).

Residue Gly-95 to Ser-102 coordinates ATP.

Belongs to the prokaryotic pantothenate kinase family.

It localises to the cytoplasm. It carries out the reaction (R)-pantothenate + ATP = (R)-4'-phosphopantothenate + ADP + H(+). Its pathway is cofactor biosynthesis; coenzyme A biosynthesis; CoA from (R)-pantothenate: step 1/5. This is Pantothenate kinase from Shewanella sp. (strain ANA-3).